Here is a 382-residue protein sequence, read N- to C-terminus: Homoserine O-succinyltransferase (382 aa).

The region spanning 51–359 (NAILVCHALS…EATQGHDAFL (309 aa)) is the AB hydrolase-1 domain. Catalysis depends on Ser-157, which acts as the Nucleophile. Arg-227 contributes to the substrate binding site. Catalysis depends on residues Asp-322 and His-355. Residue Asp-356 coordinates substrate.

This sequence belongs to the AB hydrolase superfamily. MetX family. As to quaternary structure, homodimer.

The protein resides in the cytoplasm. The catalysed reaction is L-homoserine + succinyl-CoA = O-succinyl-L-homoserine + CoA. It functions in the pathway amino-acid biosynthesis; L-methionine biosynthesis via de novo pathway; O-succinyl-L-homoserine from L-homoserine: step 1/1. In terms of biological role, transfers a succinyl group from succinyl-CoA to L-homoserine, forming succinyl-L-homoserine. This is Homoserine O-succinyltransferase from Halorhodospira halophila (strain DSM 244 / SL1) (Ectothiorhodospira halophila (strain DSM 244 / SL1)).